We begin with the raw amino-acid sequence, 378 residues long: Protein FAM170B (378 aa).

3 disordered regions span residues methionine 1–aspartate 56, threonine 244–glutamate 265, and glutamine 277–lysine 378. Composition is skewed to low complexity over residues glutamine 277 to glutamine 339 and proline 349 to lysine 378.

This sequence belongs to the FAM170 family. In terms of assembly, interacts with GOPC. Exclusively expressed in adult testis (at protein level). Expression first started at postnatal week 3 in round spermatids, elongated spermatids and mature sperm.

It localises to the cytoplasmic vesicle. The protein resides in the secretory vesicle. It is found in the acrosome. The protein localises to the acrosome outer membrane. Its function is as follows. Plays a role in fertilization through the acrosome reaction. In Mus musculus (Mouse), this protein is Protein FAM170B.